The sequence spans 106 residues: Urease subunit beta (106 aa).

Belongs to the urease beta subunit family. Heterotrimer of UreA (gamma), UreB (beta) and UreC (alpha) subunits. Three heterotrimers associate to form the active enzyme.

It localises to the cytoplasm. The catalysed reaction is urea + 2 H2O + H(+) = hydrogencarbonate + 2 NH4(+). The protein operates within nitrogen metabolism; urea degradation; CO(2) and NH(3) from urea (urease route): step 1/1. The sequence is that of Urease subunit beta from Synechococcus sp. (strain WH7805).